A 488-amino-acid chain; its full sequence is UDP-N-acetylmuramoyl-L-alanyl-D-glutamate--2,6-diaminopimelate ligase (488 aa).

Residues Leu24, Ser26, and 41 to 43 (HQV) contribute to the UDP-N-acetyl-alpha-D-muramoyl-L-alanyl-D-glutamate site. Residue 113 to 119 (GTNGKTT) participates in ATP binding. Residues Asn154, 155–156 (TT), Ser182, Gln188, and Arg190 contribute to the UDP-N-acetyl-alpha-D-muramoyl-L-alanyl-D-glutamate site. Lys222 carries the N6-carboxylysine modification. Meso-2,6-diaminopimelate-binding positions include Arg386, 410-413 (DNPR), Gly461, and Glu465. Positions 410 to 413 (DNPR) match the Meso-diaminopimelate recognition motif motif.

It belongs to the MurCDEF family. MurE subfamily. The cofactor is Mg(2+). Carboxylation is probably crucial for Mg(2+) binding and, consequently, for the gamma-phosphate positioning of ATP.

The protein resides in the cytoplasm. It carries out the reaction UDP-N-acetyl-alpha-D-muramoyl-L-alanyl-D-glutamate + meso-2,6-diaminopimelate + ATP = UDP-N-acetyl-alpha-D-muramoyl-L-alanyl-gamma-D-glutamyl-meso-2,6-diaminopimelate + ADP + phosphate + H(+). The protein operates within cell wall biogenesis; peptidoglycan biosynthesis. Its function is as follows. Catalyzes the addition of meso-diaminopimelic acid to the nucleotide precursor UDP-N-acetylmuramoyl-L-alanyl-D-glutamate (UMAG) in the biosynthesis of bacterial cell-wall peptidoglycan. This is UDP-N-acetylmuramoyl-L-alanyl-D-glutamate--2,6-diaminopimelate ligase from Haemophilus influenzae (strain PittGG).